A 100-amino-acid polypeptide reads, in one-letter code: Aspartyl/glutamyl-tRNA(Asn/Gln) amidotransferase subunit C (100 aa).

Belongs to the GatC family. As to quaternary structure, heterotrimer of A, B and C subunits.

It catalyses the reaction L-glutamyl-tRNA(Gln) + L-glutamine + ATP + H2O = L-glutaminyl-tRNA(Gln) + L-glutamate + ADP + phosphate + H(+). The enzyme catalyses L-aspartyl-tRNA(Asn) + L-glutamine + ATP + H2O = L-asparaginyl-tRNA(Asn) + L-glutamate + ADP + phosphate + 2 H(+). Its function is as follows. Allows the formation of correctly charged Asn-tRNA(Asn) or Gln-tRNA(Gln) through the transamidation of misacylated Asp-tRNA(Asn) or Glu-tRNA(Gln) in organisms which lack either or both of asparaginyl-tRNA or glutaminyl-tRNA synthetases. The reaction takes place in the presence of glutamine and ATP through an activated phospho-Asp-tRNA(Asn) or phospho-Glu-tRNA(Gln). This chain is Aspartyl/glutamyl-tRNA(Asn/Gln) amidotransferase subunit C, found in Streptococcus pyogenes serotype M49 (strain NZ131).